A 659-amino-acid chain; its full sequence is Homeobox protein slou (659 aa).

Residues 1-21 show a composition bias toward polar residues; that stretch reads MVMLQSPAQKASDSASAQNTA. Disordered regions lie at residues 1–63, 94–152, 198–298, 316–349, 376–440, and 455–548; these read MVML…PAAK, MSSE…SFSS, AQQH…AAPS, TQASSTSALASASNSVSNASISISNSSSGSPSGR, QIAA…DRDA, and PNKF…PRRA. Composition is skewed to low complexity over residues 27-51, 95-108, and 120-135; these read SPNSNPDSPKSNTSPDVASADSVVS, SSESGSLLSRLSPL, and HNNNNSLTNHNANSNT. Positions 136 to 152 are enriched in polar residues; the sequence is RRSQSPPASVGSVSFSS. The span at 201–232 shows a compositional bias: basic residues; that stretch reads HMHHHQHQHHQHPAHPHSHQHPHPHPHPHPHP. 7 tandem repeats follow at residues 221–222, 223–224, 225–226, 227–228, 229–230, 231–232, and 233–234. A 7 X 2 AA tandem repeats of H-P region spans residues 221–234; the sequence is HPHPHPHPHPHPHP. Pro residues-rich tracts occupy residues 250 to 263 and 275 to 286; these read PPSPATSPLSPPTS and PIAPPQNPPHSS. Composition is skewed to low complexity over residues 287–298 and 316–347; these read QPPQQQQVAAPS and TQASSTSALASASNSVSNASISISNSSSGSPS. Residues 388-401 show a composition bias toward acidic residues; sequence SEELNVDGNDEDSN. Residues 417 to 435 show a composition bias toward low complexity; that stretch reads RSVNSSAAANPSSASTSAS. Acidic residues-rich tracts occupy residues 478 to 492 and 500 to 519; these read RDEEMQERLDDDQSE and NDMDQDDMCDDGSDIDDPSS. The span at 528-543 shows a compositional bias: gly residues; sequence SRNGDGKSGGGGGGGS. The homeobox DNA-binding region spans 545–604; that stretch reads PRRARTAFTYEQLVSLENKFKTTRYLSVCERLNLALSLSLTETQVKIWFQNRRTKWKKQN.

This sequence belongs to the NK-1 homeobox family. Mesodermal precursor cells of distinct muscles during embryogenesis, a subset of neuronal cells of the CNS and their precursors and also in cells of a small region of the midgut.

Its subcellular location is the nucleus. Its function is as follows. May play a role in specifying the identity of particular somatic muscles and neurons of the CNS. The polypeptide is Homeobox protein slou (slou) (Drosophila melanogaster (Fruit fly)).